Here is a 267-residue protein sequence, read N- to C-terminus: Putative ankyrin repeat protein RF_1099 (267 aa).

ANK repeat units follow at residues 46-75, 78-107, 136-165, and 170-199; these read DPITPIADAIKADNLEEVKKILDEGYGVNQ, LGWVPLDYAISNNNIKIADFLLKRDASMSL, DGITGMMLAAERNNPDLIKLLLKLGVNPNV, and TGMTSLMYAASYLNVEVVRVLLEQGVDPNI. The stretch at 238-265 forms a coiled coil; sequence KQKIIKERNSIKTRNKEKEKEIKKLFNS.

The protein is Putative ankyrin repeat protein RF_1099 of Rickettsia felis (strain ATCC VR-1525 / URRWXCal2) (Rickettsia azadi).